The sequence spans 279 residues: Putative expansin-A26 (279 aa).

The first 27 residues, methionine 1 to glycine 27, serve as a signal peptide directing secretion. One can recognise an Expansin-like EG45 domain in the interval glutamine 76 to glycine 186. In terms of domain architecture, Expansin-like CBD spans tyrosine 196 to glycine 275.

This sequence belongs to the expansin family. Expansin A subfamily.

It localises to the secreted. The protein localises to the cell wall. Its subcellular location is the membrane. Causes loosening and extension of plant cell walls by disrupting non-covalent bonding between cellulose microfibrils and matrix glucans. No enzymatic activity has been found. This Arabidopsis thaliana (Mouse-ear cress) protein is Putative expansin-A26 (EXPA26).